The sequence spans 358 residues: Branched-chain amino acid aminotransferase gloG (358 aa).

A pyridoxal 5'-phosphate-binding site is contributed by R91. K195 serves as the catalytic Proton acceptor. An N6-(pyridoxal phosphate)lysine modification is found at K195. Residue E231 coordinates pyridoxal 5'-phosphate.

This sequence belongs to the class-IV pyridoxal-phosphate-dependent aminotransferase family. The cofactor is pyridoxal 5'-phosphate.

It catalyses the reaction L-isoleucine + 2-oxoglutarate = (S)-3-methyl-2-oxopentanoate + L-glutamate. The catalysed reaction is L-leucine + 2-oxoglutarate = 4-methyl-2-oxopentanoate + L-glutamate. The enzyme catalyses L-valine + 2-oxoglutarate = 3-methyl-2-oxobutanoate + L-glutamate. The protein operates within mycotoxin biosynthesis. Its function is as follows. Branched-chain amino acid aminotransferase; part of the gene cluster that mediates the biosynthesis of pneumocandins, lipohexapeptides of the echinocandin family that prevent fungal cell wall formation by non-competitive inhibition of beta-1,3-glucan synthase. The 10,12-dimethylmyristoyl side chain is synthesized by the reducing polyketide synthase gloL/GLPKS4. The thioesterase gloN/GLHYD exclusively interacts with gloL/GLPKS4 to maintain turnover of the polyketide side chain. The 10R,12S-dimethylmyristic acid is then transferred to the first thiolation domain of the nonribosomal peptide synthetase gloA/GLNRPS4 by the acyl-AMP ligase gloD/GLligase, followed by its acylation to L-ornithine to trigger elongation of the cyclic hexapeptide. L-ornithine, 4R-hydroxyl-L-proline (generated from L-proline by the dioxygenase gloF/GLOXY2), 3S-hydroxyl-L-homotyrosine (generated by gloG/GLHtyB, gloH/GLHtyA, gloI/GLHtyC, gloJ/GLHtyD and hydroxylated at C-3 by the dioxygenase gloM/GLOXY1), 3R-hydroxyl-L-glutamine (generated from L-glutamine probably by the dioxygenase gloE/GLOXY3) and 3S-hydroxyl-L-proline (generated from L-proline by the dioxygenase gloF/GLOXY2 to yield pneumocandin B0), or 3S-hydroxyl-4S-methyl-L-proline (generated from L-leucine by the dioxygenase gloC/GLOXY4 to yield pneumocandin A0) are sequentially added to the growing chain. The last C domain of gloA/GLNRPS4 is proposed to be responsible for cyclization by condensation to form the peptide bond between L-ornithine and 3S-hydroxyl-4S-methyl-L-proline (for pneumocandin A0) or 3S-hydroxyl-L-proline (for pneumocandin B0). Finally, the subsequent C-4 hydroxylation of 3S-hydroxyl-L-homotyrosine and L-ornithine dihydroxylation at C-4 and C-5 are performed by the cytochrome P450 monooxygenases gloP/GLP450-1 and gloO/GLP450-2, respectively. This is Branched-chain amino acid aminotransferase gloG from Glarea lozoyensis (strain ATCC 20868 / MF5171).